Reading from the N-terminus, the 892-residue chain is Protein translocase subunit SecA (892 aa).

ATP-binding positions include Gln-89, 107–111 (GEGKT), and Asp-517. Zn(2+) is bound by residues Cys-879, Cys-881, Cys-890, and His-891.

The protein belongs to the SecA family. In terms of assembly, monomer and homodimer. Part of the essential Sec protein translocation apparatus which comprises SecA, SecYEG and auxiliary proteins SecDF-YajC and YidC. It depends on Zn(2+) as a cofactor.

It is found in the cell inner membrane. Its subcellular location is the cytoplasm. It carries out the reaction ATP + H2O + cellular proteinSide 1 = ADP + phosphate + cellular proteinSide 2.. Its function is as follows. Part of the Sec protein translocase complex. Interacts with the SecYEG preprotein conducting channel. Has a central role in coupling the hydrolysis of ATP to the transfer of proteins into and across the cell membrane, serving as an ATP-driven molecular motor driving the stepwise translocation of polypeptide chains across the membrane. This is Protein translocase subunit SecA from Ruthia magnifica subsp. Calyptogena magnifica.